Consider the following 154-residue polypeptide: 3-hydroxyacyl-[acyl-carrier-protein] dehydratase FabZ (154 aa).

His60 is an active-site residue.

The protein belongs to the thioester dehydratase family. FabZ subfamily.

It localises to the cytoplasm. It catalyses the reaction a (3R)-hydroxyacyl-[ACP] = a (2E)-enoyl-[ACP] + H2O. Its function is as follows. Involved in unsaturated fatty acids biosynthesis. Catalyzes the dehydration of short chain beta-hydroxyacyl-ACPs and long chain saturated and unsaturated beta-hydroxyacyl-ACPs. The protein is 3-hydroxyacyl-[acyl-carrier-protein] dehydratase FabZ of Synechococcus sp. (strain CC9311).